Consider the following 583-residue polypeptide: Proteasome-associated ATPase (583 aa).

The stretch at 2–90 (ASREDRDAAN…REEVDRLAQP (89 aa)) forms a coiled coil. ATP is bound at residue 271-276 (GCGKTL). The tract at residues 582–583 (YL) is docks into pockets in the proteasome alpha-ring.

Belongs to the AAA ATPase family. As to quaternary structure, homohexamer. Assembles into a hexameric ring structure that caps the 20S proteasome core. Strongly interacts with the prokaryotic ubiquitin-like protein Pup through a hydrophobic interface; the interacting region of ARC lies in its N-terminal coiled-coil domain. There is one Pup binding site per ARC hexamer ring. Upon ATP-binding, the C-terminus of ARC interacts with the alpha-rings of the proteasome core, possibly by binding to the intersubunit pockets.

It functions in the pathway protein degradation; proteasomal Pup-dependent pathway. Its function is as follows. ATPase which is responsible for recognizing, binding, unfolding and translocation of pupylated proteins into the bacterial 20S proteasome core particle. May be essential for opening the gate of the 20S proteasome via an interaction with its C-terminus, thereby allowing substrate entry and access to the site of proteolysis. Thus, the C-termini of the proteasomal ATPase may function like a 'key in a lock' to induce gate opening and therefore regulate proteolysis. This is Proteasome-associated ATPase from Acidothermus cellulolyticus (strain ATCC 43068 / DSM 8971 / 11B).